The following is a 459-amino-acid chain: tRNA(Ile2) 2-agmatinylcytidine synthetase TiaS (459 aa).

The OB DNA-binding region spans 282-360 (VRVRVWVASI…TINLEKLHII (79 aa)).

Belongs to the TiaS family.

It localises to the cytoplasm. It catalyses the reaction cytidine(34) in tRNA(Ile2) + agmatine + ATP + H2O = 2-agmatinylcytidine(34) in tRNA(Ile2) + AMP + 2 phosphate + 2 H(+). ATP-dependent agmatine transferase that catalyzes the formation of 2-agmatinylcytidine (agm2C) at the wobble position (C34) of tRNA(Ile2), converting the codon specificity from AUG to AUA. The chain is tRNA(Ile2) 2-agmatinylcytidine synthetase TiaS from Staphylothermus marinus (strain ATCC 43588 / DSM 3639 / JCM 9404 / F1).